The following is a 165-amino-acid chain: Transcription elongation factor A protein-like 1 (165 aa).

2 disordered regions span residues 1–66 (MENS…LLPE) and 89–124 (IPMEQPPCGIGKHKLEEGSFKERLARSRPQFRGDIH). Residues 33 to 60 (CSEDDQSSEDLSSEEQSSDEEFFPEELL) are compositionally biased toward acidic residues. Over residues 101–124 (HKLEEGSFKERLARSRPQFRGDIH) the composition is skewed to basic and acidic residues.

Belongs to the TFS-II family. TFA subfamily.

The protein localises to the nucleus. In terms of biological role, may be involved in transcriptional regulation. Modulates various viral and cellular promoters in a promoter context-dependent manner. Does not bind DNA directly. The protein is Transcription elongation factor A protein-like 1 of Rattus norvegicus (Rat).